A 436-amino-acid polypeptide reads, in one-letter code: MSIEVNWGTATSGPDGEALAERIRSFIHDKFQQVPLPRFIRSVQVHSFDFGTVAPDLEIKDFCEPFADFYEDDEDGDSGSEISEELQHRTHDNPWDRTQSELNETSFRDDRPVTSHHALRDPFDEDFRQHTSSPLRSPIALGDHLNPHFLPRAGTPGIPGGTSTLGYHLMSLGGLSGTQTPLAAVAGGSPFTTNWTDPSPMGQGNKTGIRPSPLHRADADIDSSNPASRPSTASTHPSGSNRSSHPDGHPEHNDDPISSSENPLLQNQPPPRMRERRPEDFQILCHVKYAGDIRLSLTAEILLDYPMPSFVGLPLKLNVTGITFDGVAVIAYIRKRVHFCFLSPEDAEALVGSGSYSGQQETPGPSTGSSGGGNPSPHQKGLSLLQEIRVESEIGRKEDGKQVLKNVGKVERFVLAQVRRIFDEELVFPSFYTFLI.

The 436-residue stretch at methionine 1–isoleucine 436 folds into the SMP-LTD domain. Residues aspartate 73–glutamate 84 are compositionally biased toward acidic residues. Disordered stretches follow at residues aspartate 73–threonine 98, alanine 184–glutamate 275, and glycine 352–lysine 380. Basic and acidic residues predominate over residues glutamate 85 to threonine 98. Polar residues-rich tracts occupy residues proline 190–lysine 206 and aspartate 222–serine 243. Over residues serine 244–aspartate 255 the composition is skewed to basic and acidic residues. Over residues proline 256 to asparagine 267 the composition is skewed to polar residues.

This sequence belongs to the MDM12 family. In terms of assembly, component of the ER-mitochondria encounter structure (ERMES) or MDM complex, composed of mmm1, mdm10, mdm12 and mdm34. A mmm1 homodimer associates with one molecule of mdm12 on each side in a pairwise head-to-tail manner, and the SMP-LTD domains of mmm1 and mdm12 generate a continuous hydrophobic tunnel for phospholipid trafficking.

It localises to the mitochondrion outer membrane. It is found in the endoplasmic reticulum membrane. Its function is as follows. Component of the ERMES/MDM complex, which serves as a molecular tether to connect the endoplasmic reticulum (ER) and mitochondria. Components of this complex are involved in the control of mitochondrial shape and protein biogenesis, and function in nonvesicular lipid trafficking between the ER and mitochondria. Mdm12 is required for the interaction of the ER-resident membrane protein mmm1 and the outer mitochondrial membrane-resident beta-barrel protein mdm10. The mdm12-mmm1 subcomplex functions in the major beta-barrel assembly pathway that is responsible for biogenesis of all mitochondrial outer membrane beta-barrel proteins, and acts in a late step after the SAM complex. The mdm10-mdm12-mmm1 subcomplex further acts in the TOM40-specific pathway after the action of the mdm12-mmm1 complex. Essential for establishing and maintaining the structure of mitochondria and maintenance of mtDNA nucleoids. The polypeptide is Mitochondrial distribution and morphology protein 12 (Emericella nidulans (strain FGSC A4 / ATCC 38163 / CBS 112.46 / NRRL 194 / M139) (Aspergillus nidulans)).